A 30-amino-acid chain; its full sequence is Alpha-conotoxin EIVA (30 aa).

Intrachain disulfides connect cysteine 2–cysteine 16, cysteine 3–cysteine 11, and cysteine 14–cysteine 24. 5 positions are modified to 4-hydroxyproline: proline 7, proline 13, proline 21, proline 22, and proline 27. Position 30 is a glycine amide (glycine 30).

As to expression, expressed by the venom duct.

Its subcellular location is the secreted. Alpha-conotoxins act on postsynaptic membranes, they bind to the nicotinic acetylcholine receptors (nAChR) and thus inhibit them. This toxin binds with high affinity to both fetal (alpha-1-beta-1-epsilon-delta (CHRNA1-CHRNB1-CHRND-CHRNE) subunits) and adult (alpha-1/beta-1/gamma/delta subunits) mammalian muscle nicotinic acetylcholine receptors (nAChR). The protein is Alpha-conotoxin EIVA of Conus ermineus (Agate cone).